We begin with the raw amino-acid sequence, 478 residues long: Protein nucleotidyltransferase YdiU (478 aa).

8 residues coordinate ATP: Gly84, Gly86, Arg87, Lys107, Asp119, Gly120, Arg170, and Arg177. The Proton acceptor role is filled by Asp246. Positions 247 and 256 each coordinate Mg(2+). Asp256 is a binding site for ATP.

This sequence belongs to the SELO family. Requires Mg(2+) as cofactor. It depends on Mn(2+) as a cofactor.

It catalyses the reaction L-seryl-[protein] + ATP = 3-O-(5'-adenylyl)-L-seryl-[protein] + diphosphate. The enzyme catalyses L-threonyl-[protein] + ATP = 3-O-(5'-adenylyl)-L-threonyl-[protein] + diphosphate. It carries out the reaction L-tyrosyl-[protein] + ATP = O-(5'-adenylyl)-L-tyrosyl-[protein] + diphosphate. The catalysed reaction is L-histidyl-[protein] + UTP = N(tele)-(5'-uridylyl)-L-histidyl-[protein] + diphosphate. It catalyses the reaction L-seryl-[protein] + UTP = O-(5'-uridylyl)-L-seryl-[protein] + diphosphate. The enzyme catalyses L-tyrosyl-[protein] + UTP = O-(5'-uridylyl)-L-tyrosyl-[protein] + diphosphate. Functionally, nucleotidyltransferase involved in the post-translational modification of proteins. It can catalyze the addition of adenosine monophosphate (AMP) or uridine monophosphate (UMP) to a protein, resulting in modifications known as AMPylation and UMPylation. The sequence is that of Protein nucleotidyltransferase YdiU from Escherichia coli O127:H6 (strain E2348/69 / EPEC).